Reading from the N-terminus, the 317-residue chain is Pantothenate kinase (317 aa).

101-108 (GSVAVGKS) serves as a coordination point for ATP.

The protein belongs to the prokaryotic pantothenate kinase family.

The protein localises to the cytoplasm. The enzyme catalyses (R)-pantothenate + ATP = (R)-4'-phosphopantothenate + ADP + H(+). Its pathway is cofactor biosynthesis; coenzyme A biosynthesis; CoA from (R)-pantothenate: step 1/5. The polypeptide is Pantothenate kinase (Actinobacillus succinogenes (strain ATCC 55618 / DSM 22257 / CCUG 43843 / 130Z)).